Reading from the N-terminus, the 98-residue chain is NADH-ubiquinone oxidoreductase chain 4L (98 aa).

Helical transmembrane passes span 1–21 (MSLTYMNMLLAFMISLMGLLM), 29–49 (SLLCLEGMMLSLFVMMTVTIL), and 61–81 (IILLVFAACEAALGLSLLVMV).

The protein belongs to the complex I subunit 4L family. As to quaternary structure, core subunit of respiratory chain NADH dehydrogenase (Complex I) which is composed of 45 different subunits.

The protein localises to the mitochondrion inner membrane. It catalyses the reaction a ubiquinone + NADH + 5 H(+)(in) = a ubiquinol + NAD(+) + 4 H(+)(out). Functionally, core subunit of the mitochondrial membrane respiratory chain NADH dehydrogenase (Complex I) which catalyzes electron transfer from NADH through the respiratory chain, using ubiquinone as an electron acceptor. Part of the enzyme membrane arm which is embedded in the lipid bilayer and involved in proton translocation. This is NADH-ubiquinone oxidoreductase chain 4L (MT-ND4L) from Sturnira lilium (Lesser yellow-shouldered bat).